Consider the following 601-residue polypeptide: Elongation factor 4 (601 aa).

Residues R7 to K189 form the tr-type G domain. GTP-binding positions include D19 to T24 and N136 to D139.

It belongs to the TRAFAC class translation factor GTPase superfamily. Classic translation factor GTPase family. LepA subfamily.

It is found in the cell inner membrane. The catalysed reaction is GTP + H2O = GDP + phosphate + H(+). Functionally, required for accurate and efficient protein synthesis under certain stress conditions. May act as a fidelity factor of the translation reaction, by catalyzing a one-codon backward translocation of tRNAs on improperly translocated ribosomes. Back-translocation proceeds from a post-translocation (POST) complex to a pre-translocation (PRE) complex, thus giving elongation factor G a second chance to translocate the tRNAs correctly. Binds to ribosomes in a GTP-dependent manner. The sequence is that of Elongation factor 4 from Xanthomonas campestris pv. campestris (strain ATCC 33913 / DSM 3586 / NCPPB 528 / LMG 568 / P 25).